The primary structure comprises 258 residues: Tryptophan synthase alpha chain (258 aa).

Catalysis depends on proton acceptor residues E47 and D58.

This sequence belongs to the TrpA family. Tetramer of two alpha and two beta chains.

The enzyme catalyses (1S,2R)-1-C-(indol-3-yl)glycerol 3-phosphate + L-serine = D-glyceraldehyde 3-phosphate + L-tryptophan + H2O. Its pathway is amino-acid biosynthesis; L-tryptophan biosynthesis; L-tryptophan from chorismate: step 5/5. The alpha subunit is responsible for the aldol cleavage of indoleglycerol phosphate to indole and glyceraldehyde 3-phosphate. This Bacillus cereus (strain ZK / E33L) protein is Tryptophan synthase alpha chain.